The following is a 161-amino-acid chain: Nucleotide-binding protein Mmwyl1_2033 (161 aa).

The protein belongs to the YajQ family.

Nucleotide-binding protein. The chain is Nucleotide-binding protein Mmwyl1_2033 from Marinomonas sp. (strain MWYL1).